The chain runs to 1171 residues: ATP-dependent helicase/deoxyribonuclease subunit B (1171 aa).

Residues 1–343 (MSLRFVIGRA…LVADENYRYR (343 aa)) enclose the UvrD-like helicase ATP-binding domain. 8 to 15 (GRAGSGKS) serves as a coordination point for ATP. Residues 281 to 587 (MEQPRFHSPA…QFANIPPSLD (307 aa)) form the UvrD-like helicase C-terminal domain. 4 residues coordinate [4Fe-4S] cluster: C805, C1129, C1132, and C1138.

The protein belongs to the helicase family. AddB/RexB type 1 subfamily. Heterodimer of AddA and AddB. Requires Mg(2+) as cofactor. The cofactor is [4Fe-4S] cluster.

The heterodimer acts as both an ATP-dependent DNA helicase and an ATP-dependent, dual-direction single-stranded exonuclease. Recognizes the chi site generating a DNA molecule suitable for the initiation of homologous recombination. The AddB subunit has 5' -&gt; 3' nuclease activity but not helicase activity. The chain is ATP-dependent helicase/deoxyribonuclease subunit B from Bacillus cereus (strain AH187).